A 65-amino-acid polypeptide reads, in one-letter code: Beta-defensin 106A (65 aa).

The signal sequence occupies residues 1-20 (MRTFLFLFAVLFFLTPAKNA). 3 disulfide bridges follow: C26/C53, C33/C47, and C37/C54.

This sequence belongs to the beta-defensin family. Monomer. Interacts with CCR2 (via extracellular N-terminal region); this interaction may preferentially require specific tyrosine sulfation on CCR2.

It is found in the secreted. The protein localises to the membrane. Has antibacterial activity. Acts as a ligand for C-C chemokine receptor CCR2. This is Beta-defensin 106A (DEFB106A) from Gorilla gorilla gorilla (Western lowland gorilla).